Here is a 395-residue protein sequence, read N- to C-terminus: S-adenosylmethionine synthase (395 aa).

His-18 contacts ATP. Asp-20 contributes to the Mg(2+) binding site. Glu-46 provides a ligand contact to K(+). L-methionine-binding residues include Glu-59 and Gln-103. The flexible loop stretch occupies residues 103–113; the sequence is QSADIAVGVDS. ATP contacts are provided by residues 170–172, 235–236, Asp-244, 250–251, Ala-267, and Lys-271; these read DAK, KF, and RK. Asp-244 contributes to the L-methionine binding site. Lys-275 contacts L-methionine.

The protein belongs to the AdoMet synthase family. As to quaternary structure, homotetramer; dimer of dimers. Mg(2+) serves as cofactor. K(+) is required as a cofactor.

The protein localises to the cytoplasm. It carries out the reaction L-methionine + ATP + H2O = S-adenosyl-L-methionine + phosphate + diphosphate. The protein operates within amino-acid biosynthesis; S-adenosyl-L-methionine biosynthesis; S-adenosyl-L-methionine from L-methionine: step 1/1. Its function is as follows. Catalyzes the formation of S-adenosylmethionine (AdoMet) from methionine and ATP. The overall synthetic reaction is composed of two sequential steps, AdoMet formation and the subsequent tripolyphosphate hydrolysis which occurs prior to release of AdoMet from the enzyme. The sequence is that of S-adenosylmethionine synthase from Granulibacter bethesdensis (strain ATCC BAA-1260 / CGDNIH1).